Reading from the N-terminus, the 581-residue chain is Membrane protein insertase YidC (581 aa).

Residues 7–27 (ILIVALAVVSYLMVLQWNEDY) traverse the membrane as a helical segment. The disordered stretch occupies residues 41–62 (AATPALPDTPADTASTGGDDIP). 5 helical membrane-spanning segments follow: residues 365-385 (TVDY…LEVI), 388-408 (LLGN…LIFF), 458-478 (LGGC…YWVL), 489-509 (WMFW…PIIM), and 536-556 (PIIF…YWVV).

It belongs to the OXA1/ALB3/YidC family. Type 1 subfamily. In terms of assembly, interacts with the Sec translocase complex via SecD. Specifically interacts with transmembrane segments of nascent integral membrane proteins during membrane integration.

It localises to the cell inner membrane. In terms of biological role, required for the insertion and/or proper folding and/or complex formation of integral membrane proteins into the membrane. Involved in integration of membrane proteins that insert both dependently and independently of the Sec translocase complex, as well as at least some lipoproteins. Aids folding of multispanning membrane proteins. This chain is Membrane protein insertase YidC, found in Ectopseudomonas mendocina (strain ymp) (Pseudomonas mendocina).